Here is a 58-residue protein sequence, read N- to C-terminus: UPF0337 protein OB2685 (58 aa).

Basic and acidic residues-rich tracts occupy residues 1–22 and 30–46; these read MSDGMKDKAKAIGKKIKGEAKD and DPQRKAEGKRDKAKGEA. A disordered region spans residues 1–58; that stretch reads MSDGMKDKAKAIGKKIKGEAKDQWGSATDDPQRKAEGKRDKAKGEAQDTIADAKNNNK.

Belongs to the UPF0337 (CsbD) family.

The protein is UPF0337 protein OB2685 of Oceanobacillus iheyensis (strain DSM 14371 / CIP 107618 / JCM 11309 / KCTC 3954 / HTE831).